The primary structure comprises 249 residues: MAQYYPGTTKVAQNRRNFCNPEYELEKLREISDEDVVKILGHRAPGEEYPSVHPPLEEMDEPEDAIREMVEPIDGAKAGDRVRYIQFTDSMYFAPAQPYVRSRAYLCRYRGADAGTLSGRQIIETRERDLEKISKELLETEFFDPARSGVRGKSVHGHSLRLDEDGMMFDMLRRQIYNKDTGRVEMVKNQIGDELDEPVDLGEPLDEETLMEKTTIYRVDGEAYRDDVEAVEIMQRIHVLRSQGGFNLE.

Arginine 120 provides a ligand contact to coenzyme M.

This sequence belongs to the methyl-coenzyme M reductase gamma subunit family. MCR is a hexamer of two alpha, two beta, and two gamma chains, forming a dimer of heterotrimers. It depends on coenzyme F430 as a cofactor.

The protein localises to the cytoplasm. The enzyme catalyses coenzyme B + methyl-coenzyme M = methane + coenzyme M-coenzyme B heterodisulfide. It participates in one-carbon metabolism; methyl-coenzyme M reduction; methane from methyl-coenzyme M: step 1/1. Methyl-coenzyme M reductase activity is inhibited by 3-nitrooxypropanol (3-NOP) in vitro and in vivo, by oxidation of its active site Ni(I), which stops both growth and methanogenesis. Is also inhibited by the reaction product CoM-S-S-CoB. Its function is as follows. Component of the methyl-coenzyme M reductase (MCR) I that catalyzes the reductive cleavage of methyl-coenzyme M (CoM-S-CH3 or 2-(methylthio)ethanesulfonate) using coenzyme B (CoB or 7-mercaptoheptanoylthreonine phosphate) as reductant which results in the production of methane and the mixed heterodisulfide of CoB and CoM (CoM-S-S-CoB). This is the final step in methanogenesis. Neither N-6-mercaptohexanoylthreonine phosphate (H-S-HxoTP) nor N-8-mercaptooctanoylthreonine phosphate (H-SOcoTP) nor any other thiol compound such as CoA or CoM can substitute for CoB as the electron donor. This is Methyl-coenzyme M reductase I subunit gamma (mcrG) from Methanothermobacter marburgensis (strain ATCC BAA-927 / DSM 2133 / JCM 14651 / NBRC 100331 / OCM 82 / Marburg) (Methanobacterium thermoautotrophicum).